The primary structure comprises 138 residues: ATP synthase epsilon chain (138 aa).

Residues 88–119 are disordered; it reads DREEARSTLSAAQARLDQSEQSEDKQERYEAQ. A compositionally biased stretch (basic and acidic residues) spans 109-119; it reads SEDKQERYEAQ.

Belongs to the ATPase epsilon chain family. As to quaternary structure, F-type ATPases have 2 components, CF(1) - the catalytic core - and CF(0) - the membrane proton channel. CF(1) has five subunits: alpha(3), beta(3), gamma(1), delta(1), epsilon(1). CF(0) has three main subunits: a, b and c.

The protein resides in the cellular thylakoid membrane. Functionally, produces ATP from ADP in the presence of a proton gradient across the membrane. This is ATP synthase epsilon chain from Acaryochloris marina (strain MBIC 11017).